Reading from the N-terminus, the 228-residue chain is Ribose-5-phosphate isomerase A (228 aa).

Residues 31 to 34 (TGST), 85 to 88 (DGAD), and 97 to 100 (KGGG) contribute to the substrate site. Glu-106 functions as the Proton acceptor in the catalytic mechanism. Position 124 (Lys-124) interacts with substrate.

Belongs to the ribose 5-phosphate isomerase family. Homodimer.

The enzyme catalyses aldehydo-D-ribose 5-phosphate = D-ribulose 5-phosphate. Its pathway is carbohydrate degradation; pentose phosphate pathway; D-ribose 5-phosphate from D-ribulose 5-phosphate (non-oxidative stage): step 1/1. Its function is as follows. Catalyzes the reversible conversion of ribose-5-phosphate to ribulose 5-phosphate. The protein is Ribose-5-phosphate isomerase A of Haloarcula marismortui (strain ATCC 43049 / DSM 3752 / JCM 8966 / VKM B-1809) (Halobacterium marismortui).